A 367-amino-acid polypeptide reads, in one-letter code: tRNA-specific 2-thiouridylase MnmA 2 (367 aa).

Residues Gly10–Ser17 and Met36 each bind ATP. An interaction with target base in tRNA region spans residues Asn96 to Asp98. The active-site Nucleophile is the Cys101. A disulfide bridge links Cys101 with Cys197. Residue Gly125 participates in ATP binding. The interval Lys147–Gln149 is interaction with tRNA. Catalysis depends on Cys197, which acts as the Cysteine persulfide intermediate. Residues Arg314–Tyr315 are interaction with tRNA.

The protein belongs to the MnmA/TRMU family.

It localises to the cytoplasm. The enzyme catalyses S-sulfanyl-L-cysteinyl-[protein] + uridine(34) in tRNA + AH2 + ATP = 2-thiouridine(34) in tRNA + L-cysteinyl-[protein] + A + AMP + diphosphate + H(+). Functionally, catalyzes the 2-thiolation of uridine at the wobble position (U34) of tRNA, leading to the formation of s(2)U34. The polypeptide is tRNA-specific 2-thiouridylase MnmA 2 (Aliarcobacter butzleri (strain RM4018) (Arcobacter butzleri)).